Here is a 507-residue protein sequence, read N- to C-terminus: Dolichyl pyrophosphate Man9GlcNAc2 alpha-1,3-glucosyltransferase (507 aa).

The Cytoplasmic portion of the chain corresponds to 1-2 (ME). A helical transmembrane segment spans residues 3-23 (SWPWMAVVVLLGLTVRWTVSL). Residues 24 to 114 (SSYSGAGKPP…SQAHKLFMRA (91 aa)) lie on the Lumenal side of the membrane. The N-linked (GlcNAc...) asparagine glycan is linked to asparagine 59. The helical transmembrane segment at 115-135 (TVLAADLLIYVPAVLLYCYSL) threads the bilayer. Over 136-143 (KEISPKRK) the chain is Cytoplasmic. Residues 144-164 (IASALCILLYPGLILIDYGHF) form a helical membrane-spanning segment. The Lumenal segment spans residues 165–172 (QYNSVSLG). Residues 173–193 (FALWGVLGVSWDWDLLGSLAF) traverse the membrane as a helical segment. Residues 194-229 (CLALNYKQMELYHSLPFFCFLLGKCFKKGLKGKGLA) lie on the Cytoplasmic side of the membrane. Residues 230–250 (LFIRIACTVLASFLLCWLPFL) form a helical membrane-spanning segment. At 251 to 297 (TEREHALQVVRRLFPVDRGLFEDKVANIWCSVNVFLKIKDTLPRHIQ) the chain is on the lumenal side. A helical transmembrane segment spans residues 298 to 318 (IAISFCFTLLSLLPACIKLTV). Over 319–332 (RPSCKGFRFTLVSC) the chain is Cytoplasmic. A helical transmembrane segment spans residues 333–353 (ALSFFLFSFQVHEKSILLVSL). Topologically, residues 354 to 361 (PVCLVLTE) are lumenal. A helical membrane pass occupies residues 362 to 382 (IPFMSTWFLLVSTFSMLPLLL). Topologically, residues 383 to 385 (KDE) are cytoplasmic. The chain crosses the membrane as a helical span at residues 386-406 (LLLPSVVTVMAFVIACGTFFP). The Lumenal segment spans residues 407-437 (MLENTSEEQLQLKSFAVSVRRHLPGFTFLPR). A helical membrane pass occupies residues 438-458 (IMQCLFLSSVITMVLLTILSV). Over 459 to 468 (TLDPPQKLPD) the chain is Cytoplasmic. A helical membrane pass occupies residues 469 to 489 (LFPVLICFVSCVNFVFFLVYF). Topologically, residues 490–507 (NIVIMWDSKNGRNRKKIE) are lumenal.

It belongs to the ALG6/ALG8 glucosyltransferase family.

The protein resides in the endoplasmic reticulum membrane. The catalysed reaction is an alpha-D-Man-(1-&gt;2)-alpha-D-Man-(1-&gt;2)-alpha-D-Man-(1-&gt;3)-[alpha-D-Man-(1-&gt;2)-alpha-D-Man-(1-&gt;3)-[alpha-D-Man-(1-&gt;2)-alpha-D-Man-(1-&gt;6)]-alpha-D-Man-(1-&gt;6)]-beta-D-Man-(1-&gt;4)-beta-D-GlcNAc-(1-&gt;4)-alpha-D-GlcNAc-diphospho-di-trans,poly-cis-dolichol + a di-trans,poly-cis-dolichyl beta-D-glucosyl phosphate = an alpha-D-Glc-(1-&gt;3)-alpha-D-Man-(1-&gt;2)-alpha-D-Man-(1-&gt;2)-alpha-D-Man-(1-&gt;3)-[alpha-D-Man-(1-&gt;2)-alpha-D-Man-(1-&gt;3)-[alpha-D-Man-(1-&gt;2)-alpha-D-Man-(1-&gt;6)]-alpha-D-Man-(1-&gt;6)]-beta-D-Man-(1-&gt;4)-beta-D-GlcNAc-(1-&gt;4)-alpha-D-GlcNAc-diphospho-di-trans,poly-cis-dolichol + a di-trans,poly-cis-dolichyl phosphate + H(+). Its pathway is protein modification; protein glycosylation. Dolichyl pyrophosphate Man9GlcNAc2 alpha-1,3-glucosyltransferase that operates in the biosynthetic pathway of dolichol-linked oligosaccharides, the glycan precursors employed in protein asparagine (N)-glycosylation. The assembly of dolichol-linked oligosaccharides begins on the cytosolic side of the endoplasmic reticulum membrane and finishes in its lumen. The sequential addition of sugars to dolichol pyrophosphate produces dolichol-linked oligosaccharides containing fourteen sugars, including two GlcNAcs, nine mannoses and three glucoses. Once assembled, the oligosaccharide is transferred from the lipid to nascent proteins by oligosaccharyltransferases. In the lumen of the endoplasmic reticulum, adds the first glucose residue from dolichyl phosphate glucose (Dol-P-Glc) onto the lipid-linked oligosaccharide intermediate Man(9)GlcNAc(2)-PP-Dol to produce Glc(1)Man(9)GlcNAc(2)-PP-Dol. Glc(1)Man(9)GlcNAc(2)-PP-Dol is a substrate for ALG8, the following enzyme in the biosynthetic pathway. The polypeptide is Dolichyl pyrophosphate Man9GlcNAc2 alpha-1,3-glucosyltransferase (Mus musculus (Mouse)).